Reading from the N-terminus, the 213-residue chain is ATP phosphoribosyltransferase (213 aa).

Belongs to the ATP phosphoribosyltransferase family. Short subfamily. In terms of assembly, heteromultimer composed of HisG and HisZ subunits.

The protein localises to the cytoplasm. The catalysed reaction is 1-(5-phospho-beta-D-ribosyl)-ATP + diphosphate = 5-phospho-alpha-D-ribose 1-diphosphate + ATP. It functions in the pathway amino-acid biosynthesis; L-histidine biosynthesis; L-histidine from 5-phospho-alpha-D-ribose 1-diphosphate: step 1/9. Its function is as follows. Catalyzes the condensation of ATP and 5-phosphoribose 1-diphosphate to form N'-(5'-phosphoribosyl)-ATP (PR-ATP). Has a crucial role in the pathway because the rate of histidine biosynthesis seems to be controlled primarily by regulation of HisG enzymatic activity. The sequence is that of ATP phosphoribosyltransferase (hisG) from Bacillus subtilis (strain 168).